Here is a 648-residue protein sequence, read N- to C-terminus: Siderophore transporter MYCGRDRAFT_70577 (648 aa).

2 stretches are compositionally biased toward basic and acidic residues: residues 1 to 11 (MRTSSESHSRS) and 29 to 46 (SASK…DTSI). Positions 1–58 (MRTSSESHSRSDAFNGKNDASQVTVDSDSASKDHHDHDHHHKDTSINERQSQHVHQQA) are disordered. The span at 47-58 (NERQSQHVHQQA) shows a compositional bias: polar residues. Helical transmembrane passes span 79-99 (LLLY…ALDQ), 151-171 (VVVL…QGLA), 205-225 (AFWS…NGFI), 236-256 (WGLG…IWTL), 303-323 (LIGL…LNLA), 336-356 (IAML…EALL), 409-429 (TIFI…GGLI), 438-458 (TLMV…LDGN), 468-488 (LAVS…ARVG), 500-520 (VVIS…STIA), and 578-598 (GIIL…SCLM).

This sequence belongs to the major facilitator superfamily.

Its subcellular location is the cell membrane. Siderophore transporter; part of the gene cluster 14 that mediates the biosynthesis of a ferrichrome A-like siderophors which may contribute to organismal virulence. In Zymoseptoria tritici (strain CBS 115943 / IPO323) (Speckled leaf blotch fungus), this protein is Siderophore transporter MYCGRDRAFT_70577.